The primary structure comprises 376 residues: N-acetyldiaminopimelate deacetylase (376 aa).

The active site involves Asp-69. The Proton acceptor role is filled by Glu-128.

This sequence belongs to the peptidase M20A family. N-acetyldiaminopimelate deacetylase subfamily.

The enzyme catalyses N-acetyl-(2S,6S)-2,6-diaminopimelate + H2O = (2S,6S)-2,6-diaminopimelate + acetate. The protein operates within amino-acid biosynthesis; L-lysine biosynthesis via DAP pathway; LL-2,6-diaminopimelate from (S)-tetrahydrodipicolinate (acetylase route): step 3/3. In terms of biological role, catalyzes the conversion of N-acetyl-diaminopimelate to diaminopimelate and acetate. The protein is N-acetyldiaminopimelate deacetylase of Bacillus mycoides (strain KBAB4) (Bacillus weihenstephanensis).